Reading from the N-terminus, the 348-residue chain is Structural glycoprotein p40 (348 aa).

The protein belongs to the baculoviridae gp41 family. O-glycosylated; contains N-acetylglucosamine side chains.

This is Structural glycoprotein p40 (P40) from Bombyx mori nuclear polyhedrosis virus (BmNPV).